The following is a 320-amino-acid chain: Aspartate carbamoyltransferase catalytic subunit (320 aa).

Residues Arg-70 and Thr-71 each contribute to the carbamoyl phosphate site. Residue Lys-98 participates in L-aspartate binding. Carbamoyl phosphate is bound by residues Arg-120, His-149, and Gln-152. Residues Arg-182 and Arg-237 each coordinate L-aspartate. Gly-278 and Pro-279 together coordinate carbamoyl phosphate.

Belongs to the aspartate/ornithine carbamoyltransferase superfamily. ATCase family. As to quaternary structure, heterododecamer (2C3:3R2) of six catalytic PyrB chains organized as two trimers (C3), and six regulatory PyrI chains organized as three dimers (R2).

The enzyme catalyses carbamoyl phosphate + L-aspartate = N-carbamoyl-L-aspartate + phosphate + H(+). It participates in pyrimidine metabolism; UMP biosynthesis via de novo pathway; (S)-dihydroorotate from bicarbonate: step 2/3. Its function is as follows. Catalyzes the condensation of carbamoyl phosphate and aspartate to form carbamoyl aspartate and inorganic phosphate, the committed step in the de novo pyrimidine nucleotide biosynthesis pathway. The protein is Aspartate carbamoyltransferase catalytic subunit of Ruthia magnifica subsp. Calyptogena magnifica.